The chain runs to 131 residues: Small ribosomal subunit protein uS8 (131 aa).

This sequence belongs to the universal ribosomal protein uS8 family. In terms of assembly, part of the 30S ribosomal subunit. Contacts proteins S5 and S12.

One of the primary rRNA binding proteins, it binds directly to 16S rRNA central domain where it helps coordinate assembly of the platform of the 30S subunit. The polypeptide is Small ribosomal subunit protein uS8 (Dictyoglomus thermophilum (strain ATCC 35947 / DSM 3960 / H-6-12)).